A 269-amino-acid chain; its full sequence is Surfeit locus protein 4 (269 aa).

A run of 5 helical transmembrane segments spans residues 64 to 84, 92 to 112, 179 to 199, 203 to 223, and 239 to 259; these read LLAS…CILV, YACF…SILW, FFSI…AIGF, LAAL…NAFW, and FFQT…GPGG. A Di-lysine motif motif is present at residues 266-269; the sequence is KKEW.

Belongs to the SURF4 family. As to quaternary structure, found in a complex composed at least of SURF4, TMED2 and TMED10. May interact with LMAN1. Interacts with ZFYVE27 and with KIF5A in a ZFYVE27-dependent manner. Interacts with STING1. Interacts with SAR1B. Interacts with TMEM41B.

Its subcellular location is the endoplasmic reticulum membrane. It is found in the endoplasmic reticulum-Golgi intermediate compartment membrane. The protein resides in the golgi apparatus membrane. Endoplasmic reticulum cargo receptor that mediates the export of lipoproteins by recruiting cargos into COPII vesicles to facilitate their secretion. Acts as a cargo receptor for lipoproteins bearing both APOB and APOA1, thereby regulating lipoprotein delivery and the maintenance of lipid homeostasis. Synergizes with the GTPase SAR1B to mediate transport of circulating lipoproteins. Promotes the secretion of PCSK9. Also mediates the efficient secretion of erythropoietin (EPO). May also play a role in the maintenance of the architecture of the endoplasmic reticulum-Golgi intermediate compartment and of the Golgi. The polypeptide is Surfeit locus protein 4 (Bos taurus (Bovine)).